Consider the following 1016-residue polypeptide: Primary septum glucan endo-1,3-beta-D-glucosidase (1016 aa).

The first 20 residues, 1 to 20 (MSSYLRSFIFGLLTISLAQC), serve as a signal peptide directing secretion. N-linked (GlcNAc...) asparagine glycosylation occurs at Asn-37. The segment at 45–272 (TNVFDSVVDT…NGYIQIAKIP (228 aa)) is beta-sandwich subdomain. A GH81 domain is found at 45 to 741 (TNVFDSVVDT…AYAAGLWAND (697 aa)). Positions 273–364 (LGDGTAEALY…AGNSITFAEA (92 aa)) are alpha/beta subdomain. A (alpha/beta)6 barrel subdomain region spans residues 379 to 741 (GQIGYSEEAL…AYAAGLWAND (363 aa)). Asp-492 is an active-site residue. Residues His-496, Asp-567, Glu-569, Glu-573, and Tyr-650 each contribute to the (1,3-beta-D-glucosyl)n site. Catalysis depends on residues Glu-569 and Glu-573. Residues 748-1016 (SSSSTTTTST…GCSNGALVAA (269 aa)) are required for catalytic activity against insoluble beta-glucan and to restrict localization of the enzyme to the cell septum. The segment at 844–872 (SSTTSSITPTPTTTSSITPTPTTTSTTTT) is disordered.

Belongs to the glycosyl hydrolase 81 family.

It is found in the cell septum. It catalyses the reaction Hydrolysis of (1-&gt;3)-beta-D-glucosidic linkages in (1-&gt;3)-beta-D-glucans.. In terms of biological role, cleaves internal linkages in 1,3-beta-glucan. Has a role in cell separation where it is required for the degradation of the primary septum after completion of cytokinesis. The protein is Primary septum glucan endo-1,3-beta-D-glucosidase of Schizosaccharomyces pombe (strain 972 / ATCC 24843) (Fission yeast).